Reading from the N-terminus, the 388-residue chain is Riboflavin biosynthesis protein RibBA (388 aa).

The interval 1–186 (MEELREAFEE…MDDVWREFVK (186 aa)) is DHBP synthase. D-ribulose 5-phosphate is bound by residues 21-22 (RE), D26, 125-129 (RKGHT), and E149. E22 serves as a coordination point for Mg(2+). H128 serves as a coordination point for Mg(2+). The tract at residues 187 to 388 (RKLLMKKKAE…LEEIFREVNS (202 aa)) is GTP cyclohydrolase II. 235–239 (RIHSE) is a GTP binding site. 3 residues coordinate Zn(2+): C240, C251, and C253. Residues Q256, 277 to 279 (EGR), and T299 each bind GTP. D311 (proton acceptor; for GTP cyclohydrolase activity) is an active-site residue. The active-site Nucleophile; for GTP cyclohydrolase activity is the R313. The GTP site is built by T334 and K339.

This sequence in the N-terminal section; belongs to the DHBP synthase family. In the C-terminal section; belongs to the GTP cyclohydrolase II family. Requires Mg(2+) as cofactor. It depends on Mn(2+) as a cofactor. The cofactor is Zn(2+).

The enzyme catalyses D-ribulose 5-phosphate = (2S)-2-hydroxy-3-oxobutyl phosphate + formate + H(+). It carries out the reaction GTP + 4 H2O = 2,5-diamino-6-hydroxy-4-(5-phosphoribosylamino)-pyrimidine + formate + 2 phosphate + 3 H(+). It functions in the pathway cofactor biosynthesis; riboflavin biosynthesis; 2-hydroxy-3-oxobutyl phosphate from D-ribulose 5-phosphate: step 1/1. It participates in cofactor biosynthesis; riboflavin biosynthesis; 5-amino-6-(D-ribitylamino)uracil from GTP: step 1/4. In terms of biological role, catalyzes the conversion of D-ribulose 5-phosphate to formate and 3,4-dihydroxy-2-butanone 4-phosphate. Functionally, catalyzes the conversion of GTP to 2,5-diamino-6-ribosylamino-4(3H)-pyrimidinone 5'-phosphate (DARP), formate and pyrophosphate. In Thermotoga maritima (strain ATCC 43589 / DSM 3109 / JCM 10099 / NBRC 100826 / MSB8), this protein is Riboflavin biosynthesis protein RibBA.